Consider the following 55-residue polypeptide: UPF0391 membrane protein Sfum_0248 (55 aa).

Transmembrane regions (helical) follow at residues 4-24 (WALI…GGII) and 28-48 (AWIA…SLLS).

It belongs to the UPF0391 family.

It localises to the cell membrane. The protein is UPF0391 membrane protein Sfum_0248 of Syntrophobacter fumaroxidans (strain DSM 10017 / MPOB).